A 181-amino-acid chain; its full sequence is Probable GTP-binding protein EngB (181 aa).

The 164-residue stretch at 18–181 (PKNEICFVGR…LQDLVNNLFN (164 aa)) folds into the EngB-type G domain. GTP is bound by residues 26-33 (GRSNVGKS), 52-56 (GKTKL), 70-73 (DLPG), 137-140 (TKRD), and 164-166 (VSI). Ser-33 and Thr-54 together coordinate Mg(2+).

The protein belongs to the TRAFAC class TrmE-Era-EngA-EngB-Septin-like GTPase superfamily. EngB GTPase family. It depends on Mg(2+) as a cofactor.

Functionally, necessary for normal cell division and for the maintenance of normal septation. In Mycoplasma mobile (strain ATCC 43663 / 163K / NCTC 11711) (Mesomycoplasma mobile), this protein is Probable GTP-binding protein EngB.